Consider the following 188-residue polypeptide: MRVIASSIRKGNVIEQDGKLYVVLTAENIHPGKGTPVSQIEMRRISDGVKISERYKTTDQVEKATIEDSNFTFLYEDADGFHFMNPESFDQVQVPKEVVGNAAPYLAENMSVKLSMHDTTPVAIQLPQRATLEVVDTEPVTKGQTASSSYKPAMLSNGVRTAVPPHIGVGTRIVVMTEDGSYVERAKD.

The protein belongs to the elongation factor P family.

It is found in the cytoplasm. Its pathway is protein biosynthesis; polypeptide chain elongation. Involved in peptide bond synthesis. Stimulates efficient translation and peptide-bond synthesis on native or reconstituted 70S ribosomes in vitro. Probably functions indirectly by altering the affinity of the ribosome for aminoacyl-tRNA, thus increasing their reactivity as acceptors for peptidyl transferase. The polypeptide is Elongation factor P (Rhodopseudomonas palustris (strain BisA53)).